The chain runs to 134 residues: Global transcriptional regulator Spx (134 aa).

C10 and C13 are oxidised to a cystine.

The protein belongs to the ArsC family. Spx subfamily. Interacts with the C-terminal domain of the alpha subunit of the RNAP.

The protein localises to the cytoplasm. In terms of biological role, global transcriptional regulator that plays a key role in stress response and exerts either positive or negative regulation of genes. Acts by interacting with the C-terminal domain of the alpha subunit of the RNA polymerase (RNAP). This interaction can enhance binding of RNAP to the promoter region of target genes and stimulate their transcription, or block interaction of RNAP with activator. The chain is Global transcriptional regulator Spx from Streptococcus pyogenes serotype M1.